Reading from the N-terminus, the 271-residue chain is MNSKELTKEVLNLFQTLPEFYFEHFHEYGIWFPIVVGIIASAVGMFGMLLFYAAEPDTEFEKLPFFVRKIASREGDEDTYFALGIYPIIILPAEGKIIKAAAIHEFFHVLFKFPWVIFQPVTGIFMTQLPYRFFNMLTQFLYTVLPKHIVLMLILLSMPILKKFGMEKSQVYELLSLASKYITFVYICALAAVIEELLVNIATAIYFLITFKFNENTFLVTVGSSLTYLSNIPMIFACMWMDFHYADGQGVEMAKKFIELVFKTELSSLFF.

Transmembrane regions (helical) follow at residues 30 to 50 (IWFPIVVGIIASAVGMFGMLL), 189 to 209 (ALAAVIEELLVNIATAIYFLI), and 218 to 238 (FLVTVGSSLTYLSNIPMIFAC).

The protein localises to the cell membrane. This is an uncharacterized protein from Aquifex aeolicus (strain VF5).